The chain runs to 538 residues: Frizzled-4 (538 aa).

Residues 1–37 (MAWQGTGPSVRGMPGGVRLRLGLLLLQLLLLQRPALG) form the signal peptide. Over 38 to 213 (FGDEEERRCD…KCGYDAGLYS (176 aa)) the chain is Extracellular. In terms of domain architecture, FZ spans 41-162 (EEERRCDPIR…NDHNHMCMEG (122 aa)). 8 disulfides stabilise this stretch: C46–C107, C54–C100, C91–C129, C118–C159, C122–C146, C182–C201, C205–C283, and C303–C378. An N-linked (GlcNAc...) asparagine glycan is attached at N60. N-linked (GlcNAc...) asparagine glycosylation occurs at N145. Residues 214–244 (RSAKEFTDIWMAVWASLCFISTTFTVLTFLI) form a helical membrane-spanning segment. The Cytoplasmic segment spans residues 245-250 (DSSRFS). Residues 251–276 (YPERPIIFLSMCYNIYSIAYIVRLTV) traverse the membrane as a helical segment. Topologically, residues 277-300 (GRERISCDFEEAAEPVLIQEGLKN) are extracellular. A helical transmembrane segment spans residues 301-334 (TGCAIIFLLMYFFGMASSIWWVILTLTWFLAAGL). Residues 335-337 (KWG) lie on the Cytoplasmic side of the membrane. A helical membrane pass occupies residues 338-366 (HEAIEMHSSYFHIAAWAIPAVKTIVILIM). Over 367-384 (RLVDADELTGLCYVGNQS) the chain is Extracellular. Residue N382 is glycosylated (N-linked (GlcNAc...) asparagine). The helical transmembrane segment at 385 to 419 (LDALTGFVVAPLFTYLVIGTLFIAAGLVALFKIRS) threads the bilayer. At 420–432 (NLQKDGTKTDKLE) the chain is on the cytoplasmic side. Residues 433 to 461 (RLMVKIGVFSVLYTVPATCVIACYFYEIS) form a helical membrane-spanning segment. Over 462–474 (NWALFRYSADDSN) the chain is Extracellular. The chain crosses the membrane as a helical span at residues 475-496 (MAVEMLKIFMSLLVGITSGMWI). The Cytoplasmic segment spans residues 497–538 (WSAKTLHTWQKCSNRLVNSGKVKREKRGNGWVKPGKGNETVV). Residues 500 to 505 (KTLHTW) carry the Lys-Thr-X-X-X-Trp motif, mediates interaction with the PDZ domain of Dvl family members motif. A PDZ-binding motif is present at residues 536 to 538 (TVV).

This sequence belongs to the G-protein coupled receptor Fz/Smo family. As to quaternary structure, interacts with MAGI3 and NDP. Component of a complex, at least composed of TSPAN12, FZD4 and norrin (NDP). Interacts (via FZ domain) with TSKU; TSKU competes with WNT2B for binding to FZD4, inhibiting Wnt signaling and repressing peripheral eye development. Interacts with glypican GPC3. Post-translationally, ubiquitinated by ZNRF3, leading to its degradation by the proteasome.

The protein resides in the cell membrane. In terms of biological role, receptor for Wnt proteins. Most of frizzled receptors are coupled to the beta-catenin (CTNNB1) canonical signaling pathway, which leads to the activation of disheveled proteins, inhibition of GSK-3 kinase, nuclear accumulation of beta-catenin (CTNNB1) and activation of Wnt target genes. Plays a critical role in retinal vascularization by acting as a receptor for Wnt proteins and norrin (NDP). In retina, it can be both activated by Wnt protein-binding, but also by a Wnt-independent signaling via binding of norrin (NDP), promoting in both cases beta-catenin (CTNNB1) accumulation and stimulation of LEF/TCF-mediated transcriptional programs. A second signaling pathway involving PKC and calcium fluxes has been seen for some family members, but it is not yet clear if it represents a distinct pathway or if it can be integrated in the canonical pathway, as PKC seems to be required for Wnt-mediated inactivation of GSK-3 kinase. Both pathways seem to involve interactions with G-proteins. May be involved in transduction and intercellular transmission of polarity information during tissue morphogenesis and/or in differentiated tissues. This Rattus norvegicus (Rat) protein is Frizzled-4 (Fzd4).